Reading from the N-terminus, the 99-residue chain is Aspartyl/glutamyl-tRNA(Asn/Gln) amidotransferase subunit C (99 aa).

The protein belongs to the GatC family. As to quaternary structure, heterotrimer of A, B and C subunits.

It carries out the reaction L-glutamyl-tRNA(Gln) + L-glutamine + ATP + H2O = L-glutaminyl-tRNA(Gln) + L-glutamate + ADP + phosphate + H(+). The catalysed reaction is L-aspartyl-tRNA(Asn) + L-glutamine + ATP + H2O = L-asparaginyl-tRNA(Asn) + L-glutamate + ADP + phosphate + 2 H(+). Allows the formation of correctly charged Asn-tRNA(Asn) or Gln-tRNA(Gln) through the transamidation of misacylated Asp-tRNA(Asn) or Glu-tRNA(Gln) in organisms which lack either or both of asparaginyl-tRNA or glutaminyl-tRNA synthetases. The reaction takes place in the presence of glutamine and ATP through an activated phospho-Asp-tRNA(Asn) or phospho-Glu-tRNA(Gln). This is Aspartyl/glutamyl-tRNA(Asn/Gln) amidotransferase subunit C from Albidiferax ferrireducens (strain ATCC BAA-621 / DSM 15236 / T118) (Rhodoferax ferrireducens).